The chain runs to 621 residues: MGRAVGIDLGTTNSCIATLEGGEPTVIVNAEGARTTPSVVAFSKSGEILVGEVAKRQAVTNVDRTISSVKRHMGTDWTVDIDGKEWTPQEISAQILMKLKRDAEAYLGEPVTDAVITCPAYFNDAQRQATKDAGTIAGLNVLRIINEPTAAALAYGLEKSKEDERILVFDLGGGTFDVSLLEIGKDDDGFSTIQVQATSGDNHLGGDDWDQRIIDWLVGEVKNKYGVDLSKDKIALQRLKEAAEQAKKELSSSMSTTINMQYLAMTPDGTPVHLDETLTRAHFEEMTKDLLDRCRTPFNNVLADAGISVSQIDHVILVGGSTRMPAVKELVKELDGGKEANQSVNPDEVVAIGAAVQSGVIKGDRKDVLLIDVTPLSLGIETKGGIMTKLIERNTAIPAKRSEIFSTAEDNQPSVLIQVYQGEREFARDNKPLGTFELTGIAPAPRGVPQIEVTFDIDANGIVHVSAKDKGTGKEQSMTITGGSALPKEEIDQMIKDAEAHEADDKKRKEDAETRNNAENFAYQTEKLVNDNKDKLSDDVAKSVTDAINELKDALKGDDIEKIKAAQEKLMTEAQKIGQALYAQQGAEGAAGAADSGSANNGGDDDVVDAEVVDDDDKDNK.

Threonine 175 carries the phosphothreonine; by autocatalysis modification. The span at 499-516 shows a compositional bias: basic and acidic residues; sequence EAHEADDKKRKEDAETRN. 2 disordered regions span residues 499-520 and 583-621; these read EAHE…NAEN and AQQG…KDNK. Over residues 583 to 602 the composition is skewed to low complexity; it reads AQQGAEGAAGAADSGSANNG. The segment covering 603–621 has biased composition (acidic residues); that stretch reads GDDDVVDAEVVDDDDKDNK.

This sequence belongs to the heat shock protein 70 family.

Functionally, acts as a chaperone. The protein is Chaperone protein DnaK of Bifidobacterium animalis subsp. lactis (strain AD011).